Consider the following 475-residue polypeptide: CAAX prenyl protease 1 homolog (475 aa).

Residues 1–18 are Lumenal-facing; that stretch reads MGMWASVDAMWDFPAEKR. Residues 19–39 form a helical membrane-spanning segment; the sequence is IFGAVLLFSWTVYLWETFLAQ. Residues 40 to 81 lie on the Nuclear side of the membrane; sequence RQRRIYKTTTRVPAELEQIMDSDTFEKSRLYQLDKSTFSFWS. Residues 82–102 form a helical membrane-spanning segment; the sequence is GLYSEVEGTFILLFGGIPYLW. Residues 103–123 lie on the Lumenal side of the membrane; the sequence is RLSGQFCSSAGFGPEYEIIQS. Residues 124–144 traverse the membrane as a helical segment; sequence LVFLLLATLFSALTGLPWSLY. Topologically, residues 145–170 are nuclear; the sequence is NTFVIEEKHGFNHQTLEFFMKDAIKK. A helical membrane pass occupies residues 171–191; the sequence is FIVTQCILLPVSALLLYIIKI. Residues 192-195 are Lumenal-facing; that stretch reads GGDY. The helical transmembrane segment at 196 to 216 threads the bilayer; sequence FFIYAWLFTLVVSLVLVTIYA. Residues 217–347 are Nuclear-facing; it reads DYIAPLFDKF…GHWKLGHTVK (131 aa). The disordered stretch occupies residues 293–314; the sequence is DNQEESGMEARNEGEGDSEEVK. The span at 300 to 314 shows a compositional bias: basic and acidic residues; sequence MEARNEGEGDSEEVK. Histidine 335 contacts Zn(2+). Residue glutamate 336 is part of the active site. Histidine 339 contacts Zn(2+). The helical transmembrane segment at 348–368 threads the bilayer; sequence NIIISQMNSFLCFFLFAVLIG. At 369 to 382 the chain is on the lumenal side; it reads RRELFAAFGFYDSQ. The chain crosses the membrane as a helical span at residues 383-405; sequence PTLIGLLIIFQFIFSPYNEVLSF. Over 406-475 the chain is Nuclear; that stretch reads CLTVLSRRFE…LQALKNAKQD (70 aa). Glutamate 415 contributes to the Zn(2+) binding site.

Belongs to the peptidase M48A family. The cofactor is Zn(2+).

It is found in the endoplasmic reticulum membrane. The protein resides in the nucleus inner membrane. It localises to the early endosome membrane. The protein localises to the late endosome membrane. The catalysed reaction is Hydrolyzes the peptide bond -P2-(S-farnesyl or geranylgeranyl)C-P1'-P2'-P3'-COOH where P1' and P2' are amino acids with aliphatic side chains and P3' is any C-terminal residue.. Inhibited by HIV protease inhibitors, such as lopinavir, tipranavir and nelfinavir, leading to defects in lamin A/LMNA maturation and accumulation of prelamin-A/C precursors in cells. This causes defects in nuclear envelope integrity and release of DNA in the cytosol, activating the AIM2 inflammasome. Transmembrane metalloprotease whose catalytic activity is critical for processing lamin A/LMNA on the inner nuclear membrane and clearing clogged translocons on the endoplasmic reticulum. Proteolytically removes the C-terminal three residues of farnesylated proteins. Also plays an antiviral role independently of its protease activity by restricting enveloped RNA and DNA viruses. Mechanistically, controls IFITM antiviral pathway to hinder viruses from breaching the endosomal barrier by modulating membrane fluidity. The chain is CAAX prenyl protease 1 homolog from Mus musculus (Mouse).